The primary structure comprises 201 residues: MANPRVEELPDEEVKKTVVDDHDDDSSSDSDGEEETNLPAGSTAVIHSRNEKKARKAIEKLHLIRVDGITRVTLRRPKNILFVINNPEVYKSPNSGTYIVFGEAKIEDLNASAQAAAAQQLASSAGHDHDHAGHSHGEAKASEGDAKKEEEDDDEEVDADGIEDKDIELVMTQAGVSRTKAIKALKENDNDIVNSIMALSV.

The span at 1–20 (MANPRVEELPDEEVKKTVVD) shows a compositional bias: basic and acidic residues. Disordered regions lie at residues 1 to 51 (MANP…SRNE) and 118 to 165 (AQQL…IEDK). A compositionally biased stretch (acidic residues) spans 21-36 (DHDDDSSSDSDGEEET). Residues 48–113 (SRNEKKARKA…AKIEDLNASA (66 aa)) form the NAC-A/B domain. Over residues 126-149 (GHDHDHAGHSHGEAKASEGDAKKE) the composition is skewed to basic and acidic residues. Positions 150–161 (EEDDDEEVDADG) are enriched in acidic residues. Positions 162 to 200 (IEDKDIELVMTQAGVSRTKAIKALKENDNDIVNSIMALS) constitute a UBA domain.

It belongs to the NAC-alpha family. In terms of assembly, part of the nascent polypeptide-associated complex (NAC), consisting of EGD2 and EGD1. NAC associates with ribosomes via EGD1.

Its subcellular location is the cytoplasm. It localises to the nucleus. Its function is as follows. Component of the nascent polypeptide-associated complex (NAC), a dynamic component of the ribosomal exit tunnel, protecting the emerging polypeptides from interaction with other cytoplasmic proteins to ensure appropriate nascent protein targeting. The NAC complex also promotes mitochondrial protein import by enhancing productive ribosome interactions with the outer mitochondrial membrane and blocks the inappropriate interaction of ribosomes translating non-secretory nascent polypeptides with translocation sites in the membrane of the endoplasmic reticulum. EGD2 may also be involved in transcription regulation. The chain is Nascent polypeptide-associated complex subunit alpha (EGD2) from Pyricularia oryzae (strain 70-15 / ATCC MYA-4617 / FGSC 8958) (Rice blast fungus).